Here is a 1235-residue protein sequence, read N- to C-terminus: Myosin-1 (1235 aa).

The interval 1–34 is disordered; sequence MGITKRSKDKAARAERSAGGDKSSSAKPKKATFD. The segment covering 9-19 has biased composition (basic and acidic residues); sequence DKAARAERSAG. The region spanning 41–715 is the Myosin motor domain; sequence IGVSDLTLLS…TLFALEHMRD (675 aa). Position 134-141 (134-141) interacts with ATP; it reads GESGAGKT. The actin-binding stretch occupies residues 405-487; it reads SIGILDIYGF…PGIFSAMKDA (83 aa). 2 IQ domains span residues 719 to 739 and 740 to 765; these read HNMATRIQRMWRAYLAYRAEA and AIRIQRIWRKKRVGAEYLQLREEGHK. The 190-residue stretch at 773–962 folds into the TH1 domain; that stretch reads RRRMSILGSR…TVHTQPGEPP (190 aa). Disordered regions lie at residues 949-1076 and 1135-1235; these read YKSS…AAKP and APPV…EDDW. Low complexity predominate over residues 982-1046; the sequence is KGKLIKPGGP…PGAAATPAAA (65 aa). Residues 1050–1062 are compositionally biased toward polar residues; it reads PSHTRQQSSTSTV. Residues 1063 to 1073 are compositionally biased toward pro residues; the sequence is RPPPPPPPAPA. One can recognise an SH3 domain in the interval 1075 to 1134; that stretch reads KPKIMAKVLYDFAGTRENELSIKAGDMIEIVQKENNGWWLAKTPEGQAWVPAAYVEEQAP. Over residues 1135 to 1150 the composition is skewed to pro residues; that stretch reads APPVVAPRPPPPPPPA. The segment covering 1180–1210 has biased composition (polar residues); it reads SLQNRDSGMSLNGANGSGSDASRSSTPTPSI.

Belongs to the TRAFAC class myosin-kinesin ATPase superfamily. Myosin family.

The protein localises to the cytoplasm. It localises to the cytoskeleton. The protein resides in the actin patch. Its function is as follows. Type-I myosin implicated in the organization of the actin cytoskeleton. Required for proper actin cytoskeleton polarization. At the cell cortex, assembles in patch-like structures together with proteins from the actin-polymerizing machinery and promotes actin assembly. Functions as actin nucleation-promoting factor (NPF) for the Arp2/3 complex. The chain is Myosin-1 (myo-1) from Neurospora crassa (strain ATCC 24698 / 74-OR23-1A / CBS 708.71 / DSM 1257 / FGSC 987).